We begin with the raw amino-acid sequence, 317 residues long: UV DNA damage endonuclease (317 aa).

It belongs to the uve1/UvsE family.

Its function is as follows. Component in a DNA repair pathway. Removal of UV LIGHT damaged nucleotides. Recognizes pyrimidine dimers and cleave a phosphodiester bond immediately 5' to the lesion. The chain is UV DNA damage endonuclease from Bacillus anthracis (strain A0248).